The sequence spans 172 residues: RNA silencing suppressor p19 (172 aa).

Basic and acidic residues predominate over residues 1–20 (MERAIQGNDAREQANSERWD). A disordered region spans residues 1–38 (MERAIQGNDAREQANSERWDGGSGSSTSPFQLPDESPS).

It belongs to the tombusvirus protein p19 family. In terms of assembly, homodimer.

In terms of biological role, viral suppressor of RNA silencing which binds specifically to silencing RNAs (siRNAs). Acts as a molecular caliper to specifically select siRNAs based on the length of the duplex region of the RNA. The polypeptide is RNA silencing suppressor p19 (Tomato bushy stunt virus (strain type) (TBSV)).